We begin with the raw amino-acid sequence, 262 residues long: Small ribosomal subunit protein eS4 (262 aa).

The S4 RNA-binding domain occupies 42–105 (LPLIIMLRNR…GEFFRLLYDV (64 aa)).

This sequence belongs to the eukaryotic ribosomal protein eS4 family.

In Ixodes scapularis (Black-legged tick), this protein is Small ribosomal subunit protein eS4 (RpS4).